Consider the following 152-residue polypeptide: Conglutin delta 1 (152 aa).

Residues 1–22 (MAKLTILIALVAALVLVVHTSA) form the signal peptide. 4 disulfides stabilise this stretch: C30/C101, C42/C89, C90/C137, and C103/C145.

It belongs to the 2S seed storage albumins family. In terms of assembly, heterodimer of a small chain and a large chain; disulfide-linked. Expressed in developing cotyledons and in the embryonic axis of germinating seeds.

Its subcellular location is the endoplasmic reticulum. The sequence is that of Conglutin delta 1 from Lupinus angustifolius (Narrow-leaved blue lupine).